We begin with the raw amino-acid sequence, 207 residues long: Large ribosomal subunit protein uL3c (207 aa).

Residues 129 to 148 (TRGPMTHGSKNHRAPGSIGM) form a disordered region.

This sequence belongs to the universal ribosomal protein uL3 family. In terms of assembly, part of the 50S ribosomal subunit.

The protein localises to the plastid. Its subcellular location is the chloroplast. Its function is as follows. One of the primary rRNA binding proteins, it binds directly near the 3'-end of the 23S rRNA, where it nucleates assembly of the 50S subunit. This is Large ribosomal subunit protein uL3c (rpl3) from Phaeodactylum tricornutum (strain CCAP 1055/1).